A 233-amino-acid polypeptide reads, in one-letter code: Putative N-acetylmuramoyl-L-alanine amidase (233 aa).

Residues 1-219 enclose the MurNAc-LAA domain; that stretch reads MIDPGHGGQD…IANAIYIALK (219 aa).

This sequence belongs to the N-acetylmuramoyl-L-alanine amidase 3 family.

It is found in the secreted. It carries out the reaction Hydrolyzes the link between N-acetylmuramoyl residues and L-amino acid residues in certain cell-wall glycopeptides.. Functionally, cell-wall hydrolase involved in septum cleavage during cell division. In Buchnera aphidicola subsp. Schizaphis graminum (strain Sg), this protein is Putative N-acetylmuramoyl-L-alanine amidase (amiB).